Consider the following 463-residue polypeptide: Competence protein ComFA (463 aa).

The Zn(2+) site is built by Cys60, Cys63, Cys84, and Cys87. In terms of domain architecture, Helicase ATP-binding spans 133 to 285 (IEAISKKEEL…LNGQLHSVRI (153 aa)). 146 to 153 (AVCGAGKT) is a binding site for ATP. The DEAD box signature appears at 233 to 236 (DEVD). The region spanning 317 to 463 (AVKRWIEFHV…ELAAKVECTD (147 aa)) is the Helicase C-terminal domain.

This sequence belongs to the DEAD box helicase family. Monomer and dimer in solution. Interacts with DprA and ComFC; ComFA-ComFC form rings about 150 Angstroms in diameter with apparent 6-fold symmetry. Zn(2+) serves as cofactor.

It is found in the cytoplasm. Its function is as follows. Involved in transformation (genetic competence for DNA uptake). Required for DNA uptake but not for DNA binding to cells. DNA uptake is energy dependent, this protein may provide the driving force for DNA uptake. Does not have helicase activity, translocates on single-stranded (ss)DNA in a 5'-3' direction in an ATP-dependent manner, but does not unwind double-stranded (ds)DNA. ATP hydrolysis causes the release of ssDNA from ComFA. A ssDNA-stimulated ATPase; dsDNA does not stimulate ATPase. ATP hydrolysis causes the release of ssDNA from ComFA. Binds ssDNA but only very poorly to dsDNA in the absence of ATP. Binding to ssDNA does not require free DNA ends. The chain is Competence protein ComFA from Bacillus subtilis (strain 168).